Here is a 959-residue protein sequence, read N- to C-terminus: AP2-associated protein kinase 1 (959 aa).

Position 1 is an N-acetylmethionine (Met-1). The span at 1-11 (MKKFFDSRREQ) shows a compositional bias: basic and acidic residues. The segment at 1–27 (MKKFFDSRREQGSSGLGSGSSGGGGSS) is disordered. Position 14 is a phosphoserine (Ser-14). Positions 14–27 (SGLGSGSSGGGGSS) are enriched in gly residues. In terms of domain architecture, Protein kinase spans 46–315 (VTVDEVLAEG…QVSYFSFKLL (270 aa)). ATP-binding positions include 52–60 (LAEGGFALV) and Lys-74. Asp-176 acts as the Proton acceptor in catalysis. A Phosphotyrosine modification is found at Tyr-234. Ser-235 is modified (phosphoserine). A disordered region spans residues 340 to 385 (SEAAVKKTQPKARLTDPIPTTETSIAPRQRPKAGQTQPNPGILPIQ). Residues Thr-354 and Thr-389 each carry the phosphothreonine modification. Arg-391 bears the Omega-N-methylarginine mark. 2 disordered regions span residues 398–514 (PLPQ…AVHP) and 578–630 (TAPQ…RAGH). The segment covering 404–419 (GPSNQPGLLPSVSQPK) has biased composition (polar residues). The span at 420-435 (AQATPSQPLQSSQPKQ) shows a compositional bias: low complexity. Residue Thr-441 is modified to Phosphothreonine. Composition is skewed to low complexity over residues 444–481 (QTPA…QPQQ), 494–510 (QQQQ…QQFQ), and 578–603 (TAPQ…KVQT). Position 604 is a phosphothreonine (Thr-604). Positions 609-625 (IQGQKVGSLTPPSSPKT) are enriched in polar residues. A Phosphoserine modification is found at Ser-616. Thr-618 carries the phosphothreonine modification. 4 positions are modified to phosphoserine: Ser-621, Ser-622, Ser-635, and Ser-648. Residue Thr-651 is modified to Phosphothreonine. Disordered regions lie at residues 662–699 (SLNK…FDDD), 727–763 (GGSA…GGQA), 837–857 (PVAQ…TDSL), and 923–943 (ITKN…ESSL). A compositionally biased stretch (polar residues) spans 670–694 (TTTPSGSPRTSQQNVSNASEGSTWN). Ser-729 is modified (phosphoserine). Composition is skewed to polar residues over residues 738–752 (QPTQ…SFSA) and 842–857 (LPSQ…TDSL). Positions 821-958 (DKADVAVESL…SLLLVDQLID (138 aa)) are clathrin-binding domain (CBD). Residues Ser-844, Ser-935, and Ser-936 each carry the phosphoserine modification. Residues 929-942 (GGHSRNSSGSSESS) are compositionally biased toward low complexity.

This sequence belongs to the protein kinase superfamily. Ser/Thr protein kinase family. Interacts (via CBD domain) with clathrin. Interacts with AP-2 complex. Interacts with NUMB. Interacts with alpha-adaptin. Interacts with EPS15 isoform 2. Interacts with membrane-bound activated NOTCH1 but not with the inactive full-length form of NOTCH1. Preferentially interacts with monoubiquitinated activated NOTCH1 compared to the non-ubiquitinated form. Post-translationally, autophosphorylated.

It is found in the cell membrane. It localises to the membrane. Its subcellular location is the clathrin-coated pit. The protein resides in the presynapse. The enzyme catalyses L-seryl-[protein] + ATP = O-phospho-L-seryl-[protein] + ADP + H(+). The catalysed reaction is L-threonyl-[protein] + ATP = O-phospho-L-threonyl-[protein] + ADP + H(+). Its activity is regulated as follows. Stimulated by clathrin. In terms of biological role, regulates clathrin-mediated endocytosis by phosphorylating the AP2M1/mu2 subunit of the adaptor protein complex 2 (AP-2) which ensures high affinity binding of AP-2 to cargo membrane proteins during the initial stages of endocytosis. Preferentially, may phosphorylate substrates on threonine residues. Regulates phosphorylation of other AP-2 subunits as well as AP-2 localization and AP-2-mediated internalization of ligand complexes. Phosphorylates NUMB and regulates its cellular localization, promoting NUMB localization to endosomes. Binds to and stabilizes the activated form of NOTCH1, increases its localization in endosomes and regulates its transcriptional activity. This is AP2-associated protein kinase 1 (Aak1) from Mus musculus (Mouse).